A 527-amino-acid polypeptide reads, in one-letter code: Putative adhesin P1-like protein MPN_500 (527 aa).

Disordered stretches follow at residues 1–26 (MDDITAPQTSAGSSSGTSTNTSGSRS), 76–148 (GWRN…LTNY), 248–269 (ASGSGSNTTSSPGIGFKIPEQS), and 468–527 (FGTD…VSGH). Residues 9 to 26 (TSAGSSSGTSTNTSGSRS) are compositionally biased toward low complexity. The segment covering 82-95 (TTSGSTGNANDTKF) has biased composition (polar residues). The span at 108-117 (SSGTNTSAGN) shows a compositional bias: low complexity. A compositionally biased stretch (polar residues) spans 128-148 (QNGQVKTSVQEATSGDNLTNY). Low complexity predominate over residues 248–262 (ASGSGSNTTSSPGIG). Polar residues predominate over residues 468 to 495 (FGTDHSTQPQPQSLKTTTPVFGRSSGNL). Over residues 500-513 (SGGGAGGGSSGSGQ) the composition is skewed to gly residues.

Belongs to the adhesin P1 family.

This chain is Putative adhesin P1-like protein MPN_500, found in Mycoplasma pneumoniae (strain ATCC 29342 / M129 / Subtype 1) (Mycoplasmoides pneumoniae).